Reading from the N-terminus, the 136-residue chain is Small ribosomal subunit protein uS8c (136 aa).

Belongs to the universal ribosomal protein uS8 family. As to quaternary structure, part of the 30S ribosomal subunit.

The protein localises to the plastid. It is found in the chloroplast. Its function is as follows. One of the primary rRNA binding proteins, it binds directly to 16S rRNA central domain where it helps coordinate assembly of the platform of the 30S subunit. This chain is Small ribosomal subunit protein uS8c (rps8), found in Oryza sativa subsp. indica (Rice).